A 142-amino-acid polypeptide reads, in one-letter code: Acidic phospholipase A2 KBf-grIB (142 aa).

Intrachain disulfides connect C28/C94, C44/C141, C46/C62, C61/C122, C68/C115, C78/C108, and C101/C113. Y45, G47, and G49 together coordinate Ca(2+). Residue H65 is part of the active site. D66 contributes to the Ca(2+) binding site. D116 is an active-site residue.

The protein belongs to the phospholipase A2 family. Group I subfamily. D49 sub-subfamily. It depends on Ca(2+) as a cofactor. As to expression, expressed by the venom gland.

It is found in the secreted. It catalyses the reaction a 1,2-diacyl-sn-glycero-3-phosphocholine + H2O = a 1-acyl-sn-glycero-3-phosphocholine + a fatty acid + H(+). Its function is as follows. PLA2 catalyzes the calcium-dependent hydrolysis of the 2-acyl groups in 3-sn-phosphoglycerides. The protein is Acidic phospholipase A2 KBf-grIB of Bungarus fasciatus (Banded krait).